The primary structure comprises 270 residues: Sugar phosphatase YidA (270 aa).

Catalysis depends on Asp9, which acts as the Nucleophile. Asp9 contacts Mg(2+). A phosphate-binding site is contributed by Met10. Asp11 serves as a coordination point for Mg(2+). Phosphate-binding positions include Thr43 to Gly44 and Lys197. Residue Asp220 coordinates Mg(2+). Asn223 is a phosphate binding site.

It belongs to the HAD-like hydrolase superfamily. Cof family. Homodimer. Mg(2+) is required as a cofactor.

It carries out the reaction sugar phosphate + H2O = sugar + phosphate.. Functionally, catalyzes the dephosphorylation of different sugar phosphates. The protein is Sugar phosphatase YidA (yidA) of Escherichia coli O6:H1 (strain CFT073 / ATCC 700928 / UPEC).